We begin with the raw amino-acid sequence, 3014 residues long: Cadherin EGF LAG seven-pass G-type receptor 1 (3014 aa).

The N-terminal stretch at 1–20 (MAPPPPPVLPVLLLLAAAAA) is a signal peptide. The Extracellular portion of the chain corresponds to 22–2469 (PAMGLRAAAW…RENGEVLPLK (2448 aa)). Residues 205 to 242 (AGTPSASPSPSPPLPPNLPEARAGPARRARRGTSGRGS) form a disordered region. Over residues 211–222 (SPSPSPPLPPNL) the composition is skewed to pro residues. Cadherin domains follow at residues 246–353 (PMPN…SPVF), 354–459 (EQSE…YPQF), 460–565 (SEQN…EPIF), 566–687 (VSSP…DPVF), 688–789 (TQPT…RPVF), 790–892 (QSSH…APQF), 893–999 (LWDF…APMF), 1000–1101 (EKDE…PPVL), and 1106–1224 (ILFN…SPLL). Residues Asn403, Asn546, Asn634, and Asn778 are each glycosylated (N-linked (GlcNAc...) asparagine). Asn1114, Asn1139, Asn1213, Asn1249, Asn1259, and Asn1287 each carry an N-linked (GlcNAc...) asparagine glycan. Residues 1303-1361 (DDNICLREPCENYMKCVSVLRFDSSAPFLSSTTVLFRPIHPINGLRCRCPPGFTGDYCE) enclose the EGF-like 1; calcium-binding domain. Disulfide bonds link Cys1307–Cys1318, Cys1312–Cys1349, Cys1351–Cys1360, Cys1367–Cys1378, Cys1372–Cys1387, Cys1389–Cys1398, Cys1407–Cys1418, Cys1412–Cys1428, and Cys1430–Cys1440. An EGF-like 2; calcium-binding domain is found at 1363-1399 (EIDLCYSDPCGANGRCRSREGGYTCECFEDFTGEHCE). Residues 1403–1441 (RSGRCANGVCKNGGTCVNLLIGGFHCVCPPGEYERPYCE) enclose the EGF-like 3; calcium-binding domain. Residues 1442–1646 (VTTRSFPPQS…IANNGTREGC (205 aa)) form the Laminin G-like 1 domain. Residues Asn1576, Asn1623, and Asn1640 are each glycosylated (N-linked (GlcNAc...) asparagine). 13 cysteine pairs are disulfide-bonded: Cys1620-Cys1646, Cys1653-Cys1664, Cys1658-Cys1673, Cys1675-Cys1684, Cys1840-Cys1870, Cys1876-Cys1887, Cys1881-Cys1896, Cys1898-Cys1907, Cys1911-Cys1922, Cys1916-Cys1934, Cys1936-Cys1945, Cys1953-Cys1966, and Cys1968-Cys1978. An EGF-like 4; calcium-binding domain is found at 1649–1685 (RRNFCDGRRCQNGGTCVNRWNMYLCECPLRFGGKNCE). Asn1666 carries the (3R)-3-hydroxyasparagine modification. Positions 1689-1870 (PHPQLFSGES…ALKVRVKDGC (182 aa)) constitute a Laminin G-like 2 domain. The region spanning 1872–1907 (VDDPCTSSPCPPNSRCHDAWEDYSCVCDKGYLGINC) is the EGF-like 5; calcium-binding domain. Residue Asp1889 is modified to (3R)-3-hydroxyaspartate. In terms of domain architecture, EGF-like 6; calcium-binding spans 1908-1946 (VDACHLNPCENMGACVRSPGSPQGYVCECGPSHYGPYCE). Residues 1947 to 1979 (NKLDLPCPRGWWGNPVCGPCHCAVSKGFDPDCN) form the EGF-like 7; calcium-binding domain. Asn1979 carries an N-linked (GlcNAc...) asparagine glycan. An EGF-like 8; calcium-binding domain is found at 1981-2016 (TNGQCQCKENYYKLLAQDTCLPCDCFPHGSHSRTCD). 5 disulfides stabilise this stretch: Cys1985-Cys2000, Cys1987-Cys2003, Cys2005-Cys2015, Cys2024-Cys2033, and Cys2036-Cys2048. In terms of domain architecture, Laminin EGF-like spans 2003–2050 (CDCFPHGSHSRTCDMATGQCACKPGVIGRQCNRCDNPFAEVTTLGCEV). Residues Asn2103, Asn2122, and Asn2257 are each glycosylated (N-linked (GlcNAc...) asparagine). A disordered region spans residues 2291 to 2328 (PEEKEGPLLRPAGRRTTPQTTRPGPGTEREAPISRRRR). The GAIN-B domain maps to 2297–2461 (PLLRPAGRRT…AVLMDISRRE (165 aa)). The segment covering 2300–2316 (RPAGRRTTPQTTRPGPG) has biased composition (low complexity). 2 disulfides stabilise this stretch: Cys2411–Cys2443 and Cys2431–Cys2445. Positions 2411–2461 (CVFWNHSLAVGGTGGWSARGCELLSRNRTHVACQCSHTASFAVLMDISRRE) are GPS. N-linked (GlcNAc...) asparagine glycans are attached at residues Asn2415 and Asn2437. The chain crosses the membrane as a helical span at residues 2470–2490 (IVTYAAVSLSLAALLVAFVLL). The Cytoplasmic segment spans residues 2491-2501 (SLVRMLRSNLH). A helical transmembrane segment spans residues 2502-2522 (SIHKHLAVALFLSQLVFVIGI). Asn2523 carries an N-linked (GlcNAc...) asparagine glycan. The Extracellular portion of the chain corresponds to 2523–2527 (NQTEN). Residues 2528–2548 (PFLCTVVAILLHYIYMSTFAW) form a helical membrane-spanning segment. The Cytoplasmic segment spans residues 2549–2572 (TLVESLHVYRMLTEVRNIDTGPMR). Residues 2573-2593 (FYYVVGWGIPAIVTGLAVGLD) traverse the membrane as a helical segment. Over 2594–2611 (PQGYGNPDFCWLSLQDTL) the chain is Extracellular. The chain crosses the membrane as a helical span at residues 2612 to 2632 (IWSFAGPIGAVIIINTVTSVL). Topologically, residues 2633 to 2655 (SAKVSCQRKHHYYGKKGIVSLLR) are cytoplasmic. A helical transmembrane segment spans residues 2656 to 2676 (TAFLLLLLISATWLLGLLAVN). Topologically, residues 2677–2683 (RDALSFH) are extracellular. A helical transmembrane segment spans residues 2684 to 2704 (YLFAIFSGLQGPFVLLFHCVL). At 2705 to 3014 (NQEVRKHLKG…QADGSDSEKP (310 aa)) the chain is on the cytoplasmic side. Phosphoserine is present on residues Ser2761 and Ser2764. 2 disordered regions span residues 2777 to 2939 (SSGL…PPPL) and 2954 to 3014 (LADC…SEKP). The segment covering 2796–2806 (SCKDPPGHDSD) has biased composition (basic and acidic residues). The segment covering 2814–2825 (DEQSSSYASSHS) has biased composition (low complexity). Phosphoserine is present on residues Ser2871 and Ser2873. Residues 2876-2904 (PSGKPRLKVETKVSVELHREEQGSHRGEY) are compositionally biased toward basic and acidic residues. Over residues 2960-2969 (SPTSSRTSSL) the composition is skewed to low complexity. Positions 2983–2992 (PGREPGRDHL) are enriched in basic and acidic residues.

It belongs to the G-protein coupled receptor 2 family. LN-TM7 subfamily. The iron and 2-oxoglutarate dependent 3-hydroxylation of aspartate and asparagine is (R) stereospecific within EGF domains.

It is found in the cell membrane. Receptor that may have an important role in cell/cell signaling during nervous system formation. This Homo sapiens (Human) protein is Cadherin EGF LAG seven-pass G-type receptor 1 (CELSR1).